The following is a 168-amino-acid chain: Variant surface antigen D (168 aa).

The N-terminal stretch at 1-29 (MKKSIFSKKLLVSFGSLVTLAAIPLIAIS) is a signal peptide. The N-palmitoyl cysteine moiety is linked to residue cysteine 30. Cysteine 30 carries S-diacylglycerol cysteine lipidation. The segment at 33–168 (TNTDQSQQPG…STSTSNMNTR (136 aa)) is disordered. Composition is skewed to low complexity over residues 35-44 (TDQSQQPGSG) and 52-71 (GTTT…ESGT). Over residues 72-81 (TTGGQTGTTT) the composition is skewed to gly residues. Repeat copies occupy residues 81-92 (TGGQSDSTSTSK), 93-104 (EQGSSDSTSTSK), 105-116 (EQGSSDSTSTSK), 117-128 (EQGSSDSTSTSK), 129-140 (EQGSSDSTSTSK), 141-152 (EQGSSDSTSTSK), and 153-164 (EQGSSDSTSTSN). The interval 81 to 164 (TGGQSDSTST…GSSDSTSTSN (84 aa)) is 7 X 12 AA tandem repeats. The segment covering 82–168 (GGQSDSTSTS…STSTSNMNTR (87 aa)) has biased composition (low complexity).

The protein resides in the cell membrane. Responsible for the antigenic diversity for host adaptation. Expression in E.coli of a construct containing vlpD, vlpE, and vlpF yields antigenically distinguishable products corresponding to each gene. This Mesomycoplasma hyorhinis (Mycoplasma hyorhinis) protein is Variant surface antigen D (vlpD).